A 543-amino-acid polypeptide reads, in one-letter code: ADP,ATP carrier protein 3 (543 aa).

The next 10 membrane-spanning stretches (helical) occupy residues 46-66 (VLYL…MGNL), 86-106 (IFLP…LSLF), 111-131 (MFDI…LVVW), 175-195 (FLFL…FNIF), 209-229 (ISVY…LTLV), 243-263 (ELGF…ILAL), 306-326 (LLIA…LVEA), 346-366 (FANF…LVVI), 382-402 (LASL…LIAF), and 504-524 (SVSG…LKYL).

The protein belongs to the ADP/ATP translocase tlc family.

The protein resides in the mitosome membrane. ATP transporter involved in the uptake of ATP from the parasite cell cytoplasm into the mitosome matrix. Equilibrates nucleotide pools across a concentration gradient between both sides of the mitosome membrane. This chain is ADP,ATP carrier protein 3 (NTT3), found in Encephalitozoon cuniculi (strain GB-M1) (Microsporidian parasite).